A 272-amino-acid polypeptide reads, in one-letter code: Tail completion protein gp15 (272 aa).

The tract at residues 240 to 272 (RDIDPEDWDGTVKQTFTSNVNRPTPPEPPGPRT) is disordered. Residues 251–260 (VKQTFTSNVN) show a composition bias toward polar residues. The span at 262–272 (PTPPEPPGPRT) shows a compositional bias: pro residues.

As to quaternary structure, hexamer. Interacts with gp3 and gp18 on the bottom part of the hexamer. Interacts with gp13 and gp14 on the top part of the hexamer.

It localises to the virion. In terms of biological role, stabilizes the tail sheath structure and acts as a connector between the end of tail and the portal vertex of the capsid. The polypeptide is Tail completion protein gp15 (15) (Enterobacteria phage T4 (Bacteriophage T4)).